The primary structure comprises 441 residues: MGYGRDQQYNKSNFNSRGGDFRGDRSSDRNSYNRDRNDNFGQRGGNQGGRSFNQPQELIKPNWEEELPNLPVFEKNFYQEAESVKARSDQEINEFRREHEMTITGHDIPKPITSFDEAGFPDYVLEEVKAEGFEKPTGIQCQGWPMALSGRDMIGVAATGSGKTLSYCLPGIVHINAQPLLSPGDGPIVLVLAPTRELAVQIQKECSKFGSSSRIRNSCVYGGVPRGQQIRELSRGAEIVIATPGRLIDMLEIGKTNLKRVTYLVLDEADRMLDMGFEPQIRKIVDQIRPDRQTLMWSATWPKEVKQLAHDYLNDPIQVQIGSLELSASHNITQLVEVVSDFEKRDRLLKHLETASEDKDSKILVFASTKRTCDEVTKYLREDGWPALAIHGDKDQRERDWVLQEFREGRSPIMVATDVAARGIGMYTNFFFQFCIFFTTN.

Residues 1–54 (MGYGRDQQYNKSNFNSRGGDFRGDRSSDRNSYNRDRNDNFGQRGGNQGGRSFNQ) form a disordered region. Over residues 7-16 (QQYNKSNFNS) the composition is skewed to polar residues. Residues 19 to 38 (GDFRGDRSSDRNSYNRDRND) show a composition bias toward basic and acidic residues. The short motif at 113-141 (TSFDEAGFPDYVLEEVKAEGFEKPTGIQC) is the Q motif element. One can recognise a Helicase ATP-binding domain in the interval 144 to 319 (WPMALSGRDM…HDYLNDPIQV (176 aa)). 157–164 (AATGSGKT) contacts ATP. The DEAD box motif lies at 267–270 (DEAD). In terms of domain architecture, Helicase C-terminal spans 347 to 441 (RLLKHLETAS…FQFCIFFTTN (95 aa)).

Belongs to the DEAD box helicase family. DDX5/DBP2 subfamily. In terms of assembly, associates with polysomes.

It localises to the cytoplasm. The protein resides in the nucleus. The enzyme catalyses ATP + H2O = ADP + phosphate + H(+). Its function is as follows. ATP-dependent RNA helicase involved nonsense-mediated mRNA decay and ribosome biogenesis through rRNA processing. The protein is ATP-dependent RNA helicase DBP2 (DBP2) of Vanderwaltozyma polyspora (strain ATCC 22028 / DSM 70294 / BCRC 21397 / CBS 2163 / NBRC 10782 / NRRL Y-8283 / UCD 57-17) (Kluyveromyces polysporus).